Here is a 353-residue protein sequence, read N- to C-terminus: Quinolinate synthase (353 aa).

2 residues coordinate iminosuccinate: H47 and S68. C113 serves as a coordination point for [4Fe-4S] cluster. Iminosuccinate contacts are provided by residues 139-141 (YAN) and S156. Residue C200 participates in [4Fe-4S] cluster binding. Residues 226–228 (HPE) and T243 each bind iminosuccinate. C297 is a [4Fe-4S] cluster binding site.

Belongs to the quinolinate synthase family. Type 1 subfamily. [4Fe-4S] cluster is required as a cofactor.

The protein resides in the cytoplasm. It catalyses the reaction iminosuccinate + dihydroxyacetone phosphate = quinolinate + phosphate + 2 H2O + H(+). The protein operates within cofactor biosynthesis; NAD(+) biosynthesis; quinolinate from iminoaspartate: step 1/1. Its function is as follows. Catalyzes the condensation of iminoaspartate with dihydroxyacetone phosphate to form quinolinate. The polypeptide is Quinolinate synthase (Photobacterium profundum (strain SS9)).